The sequence spans 263 residues: Small ribosomal subunit protein uS3 (263 aa).

Residues 39–107 (VREYLKKKLK…PVHVNIEEIR (69 aa)) form the KH type-2 domain. The tract at residues 211–263 (GELPPEAATPREEERRPRRAPRGDRPDGGRPGRPGGRGRGPRKADAAPAPEGE) is disordered. A compositionally biased stretch (basic and acidic residues) spans 219 to 240 (TPREEERRPRRAPRGDRPDGGR).

This sequence belongs to the universal ribosomal protein uS3 family. Part of the 30S ribosomal subunit. Forms a tight complex with proteins S10 and S14.

In terms of biological role, binds the lower part of the 30S subunit head. Binds mRNA in the 70S ribosome, positioning it for translation. The protein is Small ribosomal subunit protein uS3 of Bordetella petrii (strain ATCC BAA-461 / DSM 12804 / CCUG 43448).